We begin with the raw amino-acid sequence, 209 residues long: Uracil phosphoribosyltransferase (209 aa).

Residues Arg78, Arg103, and 130 to 138 (DPMFATGGT) contribute to the 5-phospho-alpha-D-ribose 1-diphosphate site. Uracil is bound by residues Ile193 and 198–200 (GDA). Asp199 provides a ligand contact to 5-phospho-alpha-D-ribose 1-diphosphate.

It belongs to the UPRTase family. It depends on Mg(2+) as a cofactor.

It catalyses the reaction UMP + diphosphate = 5-phospho-alpha-D-ribose 1-diphosphate + uracil. It functions in the pathway pyrimidine metabolism; UMP biosynthesis via salvage pathway; UMP from uracil: step 1/1. Allosterically activated by GTP. Catalyzes the conversion of uracil and 5-phospho-alpha-D-ribose 1-diphosphate (PRPP) to UMP and diphosphate. This is Uracil phosphoribosyltransferase from Campylobacter fetus subsp. fetus (strain 82-40).